Reading from the N-terminus, the 203-residue chain is ATP-dependent dethiobiotin synthetase BioD (203 aa).

11-16 is an ATP binding site; that stretch reads NVGKTI. T15 contributes to the Mg(2+) binding site. Residue K31 is part of the active site. T35 is a substrate binding site. Residues D42 and 94–97 contribute to the ATP site; that span reads EGAG. Residues D42 and E94 each coordinate Mg(2+).

The protein belongs to the dethiobiotin synthetase family. As to quaternary structure, homodimer. The cofactor is Mg(2+).

The protein resides in the cytoplasm. The enzyme catalyses (7R,8S)-7,8-diammoniononanoate + CO2 + ATP = (4R,5S)-dethiobiotin + ADP + phosphate + 3 H(+). The protein operates within cofactor biosynthesis; biotin biosynthesis; biotin from 7,8-diaminononanoate: step 1/2. Catalyzes a mechanistically unusual reaction, the ATP-dependent insertion of CO2 between the N7 and N8 nitrogen atoms of 7,8-diaminopelargonic acid (DAPA, also called 7,8-diammoniononanoate) to form a ureido ring. The polypeptide is ATP-dependent dethiobiotin synthetase BioD (Lawsonia intracellularis (strain PHE/MN1-00)).